The sequence spans 219 residues: Large ribosomal subunit protein uL3 (219 aa).

Residues 113 to 142 are disordered; that stretch reads TTKGHGYQGNIHKDNQSRGPMAHGSRYHRR.

The protein belongs to the universal ribosomal protein uL3 family. As to quaternary structure, part of the 50S ribosomal subunit. Forms a cluster with proteins L14 and L19.

In terms of biological role, one of the primary rRNA binding proteins, it binds directly near the 3'-end of the 23S rRNA, where it nucleates assembly of the 50S subunit. This Limosilactobacillus reuteri (strain DSM 20016) (Lactobacillus reuteri) protein is Large ribosomal subunit protein uL3.